Consider the following 286-residue polypeptide: ATP synthase gamma chain (286 aa).

This sequence belongs to the ATPase gamma chain family. As to quaternary structure, F-type ATPases have 2 components, CF(1) - the catalytic core - and CF(0) - the membrane proton channel. CF(1) has five subunits: alpha(3), beta(3), gamma(1), delta(1), epsilon(1). CF(0) has three main subunits: a, b and c.

It is found in the cell membrane. Its function is as follows. Produces ATP from ADP in the presence of a proton gradient across the membrane. The gamma chain is believed to be important in regulating ATPase activity and the flow of protons through the CF(0) complex. The protein is ATP synthase gamma chain of Ureaplasma urealyticum serovar 10 (strain ATCC 33699 / Western).